A 569-amino-acid chain; its full sequence is Protein AF-9 (569 aa).

The region spanning 1–138 (MASSCAVQVK…EDFRRKLLKA (138 aa)) is the YEATS domain. Residues 138–476 (AGGDPNRSIH…PPPPLLKTNN (339 aa)) are disordered. Positions 149–190 (SSSSSSSSSSSSSSSSSSSSSSSSSSSSSSSSSSSSSSSSSS) are enriched in low complexity. Residues 202-265 (EHKEKPSKDS…PKPMSKEPKA (64 aa)) show a composition bias toward basic and acidic residues. Phosphoserine is present on residues serine 289 and serine 295. Residues 296–301 (AKKRKK) carry the Nuclear localization signal motif. Over residues 304–314 (SEALFKSFSSA) the composition is skewed to low complexity. Over residues 323–350 (ADKKQIKDKSHVKMGKVKIESETSEKKK) the composition is skewed to basic and acidic residues. Lysine 340 participates in a covalent cross-link: Glycyl lysine isopeptide (Lys-Gly) (interchain with G-Cter in SUMO2). Over residues 358–369 (DIVDPNDSDVEE) the composition is skewed to acidic residues. Positions 372–396 (SSKSDSEQPSPASSSSSSSSSFTPS) are enriched in low complexity. Phosphoserine occurs at positions 413 and 420. Acidic residues predominate over residues 415–430 (DNEEESDEAEDNDNDS). Residues 446-462 (VSLSDGSDSESSSASSP) are compositionally biased toward low complexity. Serine 484 carries the phosphoserine modification.

As to quaternary structure, component of the super elongation complex (SEC), at least composed of EAF1, EAF2, CDK9, MLLT3/AF9, AFF (AFF1 or AFF4), the P-TEFb complex and ELL (ELL, ELL2 or ELL3). Interacts with BCOR. Interacts with CBX8. Interacts with ALKBH4. Ubiquitously expressed. Strong expression in the spleen.

Its subcellular location is the nucleus. It localises to the chromosome. In terms of biological role, chromatin reader component of the super elongation complex (SEC), a complex required to increase the catalytic rate of RNA polymerase II transcription by suppressing transient pausing by the polymerase at multiple sites along the DNA. Specifically recognizes and binds acylated histone H3, with a preference for histone H3 that is crotonylated. Crotonylation marks active promoters and enhancers and confers resistance to transcriptional repressors. Recognizes and binds histone H3 crotonylated at 'Lys-9' (H3K9cr), and with slightly lower affinity histone H3 crotonylated at 'Lys-18' (H3K18cr). Also recognizes and binds histone H3 acetylated and butyrylated at 'Lys-9' (H3K9ac and H3K9bu, respectively), but with lower affinity than crotonylated histone H3. In the SEC complex, MLLT3 is required to recruit the complex to crotonylated histones. Recruitment of the SEC complex to crotonylated histones promotes recruitment of DOT1L on active chromatin to deposit histone H3 'Lys-79' methylation (H3K79me). Plays a key role in hematopoietic stem cell (HSC) maintenance by preserving, rather than conferring, HSC stemness. Acts by binding to the transcription start site of active genes in HSCs and sustaining level of H3K79me2, probably by recruiting DOT1L. This chain is Protein AF-9 (Mllt3), found in Mus musculus (Mouse).